A 119-amino-acid chain; its full sequence is Large ribosomal subunit protein bL20 (119 aa).

This sequence belongs to the bacterial ribosomal protein bL20 family.

Functionally, binds directly to 23S ribosomal RNA and is necessary for the in vitro assembly process of the 50S ribosomal subunit. It is not involved in the protein synthesizing functions of that subunit. The sequence is that of Large ribosomal subunit protein bL20 from Treponema denticola (strain ATCC 35405 / DSM 14222 / CIP 103919 / JCM 8153 / KCTC 15104).